The sequence spans 69 residues: Large ribosomal subunit protein uL29 (69 aa).

Belongs to the universal ribosomal protein uL29 family.

In Polaromonas sp. (strain JS666 / ATCC BAA-500), this protein is Large ribosomal subunit protein uL29.